The chain runs to 471 residues: MALQQFGLIGLAVMGENLALNIERNGFSLTVYNRTAEKTEAFMADRAQGKNIVPAYSLEDFVASLERPRRILVMVKAGGPVDAVVEQLKPLLDPGDLIIDGGNSLFTDTERRVKDLEALGLGFMGMGVSGGEEGALNGPSLMPGGTQAAYEAVEPIVRSIAAQVDDGPCVTYIGPGGSGHYVKMVHNGIEYGDMQLIAEAYDLLKSVAGLNASELHDVFAAWNKTPELDSFLIEITADIFTKVDDLGTGQPLVELILDAAGQKGTGRWTVETALEIGVAIPTIIAAVNARILSSIKAERQAASEILSGPITEPFSGDRQAFIDSVRDALYCSKICSYAQGMALLAKASQVYNYGLNLGELARIWKGGCIIRAGFLNKIKQAYDADPTLANLLLAPEFRQTILDRQLAWRRVIAIAAERGIPVPAFSASLDYFDSYRRDRLPQNLTQAQRDYFGAHTYERTDRSGSFHAQWF.

Residues 10 to 15, 33 to 35, 75 to 77, and N103 contribute to the NADP(+) site; these read GLAVMG, NRT, and VKA. Residues N103 and 129-131 contribute to the substrate site; that span reads SGG. K183 (proton acceptor) is an active-site residue. Substrate is bound at residue 186-187; that stretch reads HN. E190 (proton donor) is an active-site residue. Residues Y191, K263, R290, R449, and H455 each contribute to the substrate site.

Belongs to the 6-phosphogluconate dehydrogenase family. Homodimer.

The catalysed reaction is 6-phospho-D-gluconate + NADP(+) = D-ribulose 5-phosphate + CO2 + NADPH. The protein operates within carbohydrate degradation; pentose phosphate pathway; D-ribulose 5-phosphate from D-glucose 6-phosphate (oxidative stage): step 3/3. In terms of biological role, catalyzes the oxidative decarboxylation of 6-phosphogluconate to ribulose 5-phosphate and CO(2), with concomitant reduction of NADP to NADPH. This is 6-phosphogluconate dehydrogenase, decarboxylating (gnd) from Synechococcus elongatus (strain ATCC 33912 / PCC 7942 / FACHB-805) (Anacystis nidulans R2).